Consider the following 344-residue polypeptide: Probable dual-specificity RNA methyltransferase RlmN (344 aa).

Residue Glu89 is the Proton acceptor of the active site. The 235-residue stretch at 95–329 (TDQRLTVCVS…VSLRASRGLD (235 aa)) folds into the Radical SAM core domain. A disulfide bond links Cys102 and Cys334. The [4Fe-4S] cluster site is built by Cys109, Cys113, and Cys116. S-adenosyl-L-methionine contacts are provided by residues 156-157 (GE), Ser186, 215-217 (SLH), and Asn291. Cys334 functions as the S-methylcysteine intermediate in the catalytic mechanism.

The protein belongs to the radical SAM superfamily. RlmN family. It depends on [4Fe-4S] cluster as a cofactor.

It localises to the cytoplasm. It catalyses the reaction adenosine(2503) in 23S rRNA + 2 reduced [2Fe-2S]-[ferredoxin] + 2 S-adenosyl-L-methionine = 2-methyladenosine(2503) in 23S rRNA + 5'-deoxyadenosine + L-methionine + 2 oxidized [2Fe-2S]-[ferredoxin] + S-adenosyl-L-homocysteine. It carries out the reaction adenosine(37) in tRNA + 2 reduced [2Fe-2S]-[ferredoxin] + 2 S-adenosyl-L-methionine = 2-methyladenosine(37) in tRNA + 5'-deoxyadenosine + L-methionine + 2 oxidized [2Fe-2S]-[ferredoxin] + S-adenosyl-L-homocysteine. Its function is as follows. Specifically methylates position 2 of adenine 2503 in 23S rRNA and position 2 of adenine 37 in tRNAs. In Parasynechococcus marenigrum (strain WH8102), this protein is Probable dual-specificity RNA methyltransferase RlmN.